The chain runs to 453 residues: Chromosomal replication initiator protein DnaA (453 aa).

Residues Met-1–Tyr-71 form a domain I, interacts with DnaA modulators region. Residues Tyr-71–Glu-114 are domain II. Residues Gln-115–Ser-331 form a domain III, AAA+ region region. Positions 159, 161, 162, and 163 each coordinate ATP. Residues Gln-332–Val-453 are domain IV, binds dsDNA.

It belongs to the DnaA family. Oligomerizes as a right-handed, spiral filament on DNA at oriC.

The protein localises to the cytoplasm. Plays an essential role in the initiation and regulation of chromosomal replication. ATP-DnaA binds to the origin of replication (oriC) to initiate formation of the DNA replication initiation complex once per cell cycle. Binds the DnaA box (a 9 base pair repeat at the origin) and separates the double-stranded (ds)DNA. Forms a right-handed helical filament on oriC DNA; dsDNA binds to the exterior of the filament while single-stranded (ss)DNA is stabiized in the filament's interior. The ATP-DnaA-oriC complex binds and stabilizes one strand of the AT-rich DNA unwinding element (DUE), permitting loading of DNA polymerase. After initiation quickly degrades to an ADP-DnaA complex that is not apt for DNA replication. Binds acidic phospholipids. This Staphylococcus aureus (strain MRSA252) protein is Chromosomal replication initiator protein DnaA.